The following is a 418-amino-acid chain: UDP-N-acetylglucosamine 1-carboxyvinyltransferase (418 aa).

22–23 serves as a coordination point for phosphoenolpyruvate; it reads KN. R92 lines the UDP-N-acetyl-alpha-D-glucosamine pocket. C116 functions as the Proton donor in the catalytic mechanism. 2-(S-cysteinyl)pyruvic acid O-phosphothioketal is present on C116. Residues D306 and I328 each coordinate UDP-N-acetyl-alpha-D-glucosamine.

It belongs to the EPSP synthase family. MurA subfamily.

The protein localises to the cytoplasm. The enzyme catalyses phosphoenolpyruvate + UDP-N-acetyl-alpha-D-glucosamine = UDP-N-acetyl-3-O-(1-carboxyvinyl)-alpha-D-glucosamine + phosphate. Its pathway is cell wall biogenesis; peptidoglycan biosynthesis. Functionally, cell wall formation. Adds enolpyruvyl to UDP-N-acetylglucosamine. This chain is UDP-N-acetylglucosamine 1-carboxyvinyltransferase, found in Solibacter usitatus (strain Ellin6076).